The sequence spans 684 residues: Macrolide export ATP-binding/permease protein MacB (684 aa).

One can recognise an ABC transporter domain in the interval 2–243 (IQLYGLRKDY…RSRLANSRAE (242 aa)). 38 to 45 (GSSGSGKT) contributes to the ATP binding site. 5 helical membrane passes run 248–268 (PASA…VLAL), 275–295 (TVLT…TMEL), 563–583 (LVIA…IMLV), 615–635 (VLCV…SVLV), and 644–664 (AMSI…GIVF).

The protein belongs to the ABC transporter superfamily. Macrolide exporter (TC 3.A.1.122) family. Homodimer.

The protein localises to the cell inner membrane. Functionally, non-canonical ABC transporter that contains transmembrane domains (TMD), which form a pore in the inner membrane, and an ATP-binding domain (NBD), which is responsible for energy generation. Confers resistance against macrolides. The protein is Macrolide export ATP-binding/permease protein MacB of Rhodopirellula baltica (strain DSM 10527 / NCIMB 13988 / SH1).